The following is a 284-amino-acid chain: P2R1A-PPP2R2A-interacting phosphatase regulator 1 (284 aa).

The tract at residues 1–65 (MAQEKMELDL…RRNSTTFPSR (65 aa)) is disordered. Residues 20-29 (EGGGPGGGGL) are compositionally biased toward gly residues. At serine 32 the chain carries Phosphoserine. Serine 34 carries the phosphoserine; by CHEK1 modification. Phosphoserine occurs at positions 42, 45, 59, and 73. Residue lysine 86 forms a Glycyl lysine isopeptide (Lys-Gly) (interchain with G-Cter in SUMO1) linkage. Phosphoserine is present on residues serine 140 and serine 144. A Phosphothreonine modification is found at threonine 146. The interval 164–185 (SNGLPPSPIPSPTTRFTTRRSQ) is disordered. Low complexity predominate over residues 175–185 (PTTRFTTRRSQ). Phosphoserine occurs at positions 184 and 186. The segment at 233–284 (GVCVSSDTLDGNSSSAGSSCNSPAKVSTTTDSPVSPAQAASPFIPVDELSSK) is disordered. The span at 243 to 254 (GNSSSAGSSCNS) shows a compositional bias: low complexity. Residues 256-267 (AKVSTTTDSPVS) show a composition bias toward polar residues. A phosphoserine mark is found at serine 264, serine 267, and serine 273.

Belongs to the FAM122 family. As to quaternary structure, interacts with PPP2CA and PPP2R1A. Interacts (via its N-terminus) with PPP2R2A; the interaction is direct and this interaction inhibits PP2A activity. The CHEK1-mediated Ser-34 phosphorylated form interacts with 14-3-3 proteins. CHEK1-mediated phosphorylation at Ser-34 negatively regulates its ability to inhibit serine/threonine-protein phosphatase 2A (PP2A) activity. Phosphorylation leads to its release from the PP2A complex and its sequestration by 14-3-3 proteins in the cytoplasm resulting in its inability to translocate to the nucleus, where it otherwise inhibits PP2A.

The protein resides in the nucleus. It is found in the cytoplasm. In terms of biological role, acts as an inhibitor of serine/threonine-protein phosphatase 2A (PP2A) activity. Inhibits PP2A activity by blocking the substrate binding site on PPP2R2A and the active site of PPP2CA. Potentiates ubiquitin-mediated proteasomal degradation of serine/threonine-protein phosphatase 2A catalytic subunit alpha (PPP2CA). Inhibits PP2A-mediated dephosphorylation of WEE1, promoting ubiquitin-mediated proteolysis of WEE1, thereby releasing G2/M checkpoint. This is P2R1A-PPP2R2A-interacting phosphatase regulator 1 from Mus musculus (Mouse).